We begin with the raw amino-acid sequence, 313 residues long: Glutathionyl-hydroquinone reductase PcpF (313 aa).

Residue Cys-53 is the Nucleophile of the active site. Glutathione is bound by residues Trp-86, 119-122 (RVTI), and 137-138 (ES). The region spanning 161-285 (PAEFRPEIDR…INLRHAKAHY (125 aa)) is the GST C-terminal domain. Tyr-184 acts as the Proton donor/acceptor in catalysis.

This sequence belongs to the GST superfamily. Xi-class GSH transferase family. In terms of assembly, homodimer.

The enzyme catalyses 2-(glutathione-S-yl)-hydroquinone + glutathione = hydroquinone + glutathione disulfide. Catalyzes glutathione (GSH)-dependent reduction of glutathionyl-hydroquinones (GS-HQs) to the corresponding hydroquinones. Can act on halogenated substrates such as GS-2,6-dichloro-p-hydroquinone (GS-DiCH) and GS-trichloro-p-hydroquinone (GS-TriCH). Involved in the degradation of pentachlorophenol (PCP), a toxic pollutant. The polypeptide is Glutathionyl-hydroquinone reductase PcpF (Sphingobium chlorophenolicum).